Here is a 492-residue protein sequence, read N- to C-terminus: Glutamyl-tRNA(Gln) amidotransferase subunit A, mitochondrial (492 aa).

Active-site charge relay system residues include Lys-78 and Ser-159. Ser-183 acts as the Acyl-ester intermediate in catalysis.

The protein belongs to the amidase family. GatA subfamily. In terms of assembly, subunit of the heterotrimeric GatCAB amidotransferase (AdT) complex, composed of A, B and C subunits.

It localises to the mitochondrion. The catalysed reaction is L-glutamyl-tRNA(Gln) + L-glutamine + ATP + H2O = L-glutaminyl-tRNA(Gln) + L-glutamate + ADP + phosphate + H(+). Allows the formation of correctly charged Gln-tRNA(Gln) through the transamidation of misacylated Glu-tRNA(Gln) in the mitochondria. The reaction takes place in the presence of glutamine and ATP through an activated gamma-phospho-Glu-tRNA(Gln). This is Glutamyl-tRNA(Gln) amidotransferase subunit A, mitochondrial from Anopheles gambiae (African malaria mosquito).